The following is a 468-amino-acid chain: Cysteine--tRNA ligase (468 aa).

Cys29 is a binding site for Zn(2+). Positions 31 to 41 (PTVYNYIHIGN) match the 'HIGH' region motif. The Zn(2+) site is built by Cys209, His234, and Glu238. The short motif at 266 to 270 (KMSKS) is the 'KMSKS' region element. Lys269 is a binding site for ATP. The residue at position 270 (Ser270) is a Phosphoserine.

It belongs to the class-I aminoacyl-tRNA synthetase family. As to quaternary structure, monomer. Zn(2+) serves as cofactor.

It is found in the cytoplasm. It catalyses the reaction tRNA(Cys) + L-cysteine + ATP = L-cysteinyl-tRNA(Cys) + AMP + diphosphate. The polypeptide is Cysteine--tRNA ligase (Oceanobacillus iheyensis (strain DSM 14371 / CIP 107618 / JCM 11309 / KCTC 3954 / HTE831)).